A 1097-amino-acid chain; its full sequence is Nitric oxide synthase-like protein (1097 aa).

A heme b-binding site is contributed by Cys77. Residues Gln140, Trp249, Tyr250, Glu254, and Asn259 each coordinate L-arginine. 2 residues coordinate (6R)-L-erythro-5,6,7,8-tetrahydrobiopterin: Trp340 and Phe353. Residue Tyr368 participates in heme b binding. The interval 387–410 is calmodulin-binding; it reads KRPINRKFHFKQIARAVKFTSKLF. The 196-residue stretch at 420–615 folds into the Flavodoxin-like domain; it reads ATVLYATETG…AFRKWASSVF (196 aa). Residues 426-430 and 561-592 each bind FMN; these read TETGK and VFAL…ERIH. Residues 669 to 914 enclose the FAD-binding FR-type domain; the sequence is KQFVSCTVKA…IRSAPNFHLP (246 aa). Residues 704-715 and 847-857 contribute to the FAD site; these read YNPGDHVGIIAC and LQPRFYSISSS. NADP(+)-binding positions include 922 to 940 and 1019 to 1034; these read ILIG…WHHR and GAHF…AEDV.

This sequence belongs to the NOS family. Heme b is required as a cofactor. FAD serves as cofactor. It depends on FMN as a cofactor.

It catalyses the reaction 2 L-arginine + 3 NADPH + 4 O2 + H(+) = 2 L-citrulline + 2 nitric oxide + 3 NADP(+) + 4 H2O. In terms of biological role, produces nitric oxide (NO) which is a messenger molecule with diverse functions throughout the body. In Bombyx mori (Silk moth), this protein is Nitric oxide synthase-like protein.